A 402-amino-acid polypeptide reads, in one-letter code: D-galactonate dehydratase family member RspA (402 aa).

Residues N37 and H122 each coordinate substrate. The Proton donor/acceptor role is filled by Y159. D210 is a binding site for Mg(2+). H212 serves as the catalytic Proton donor/acceptor. The Mg(2+) site is built by E236 and E262. Residues E262, R283, H312, D316, and E339 each coordinate substrate.

The protein belongs to the mandelate racemase/muconate lactonizing enzyme family. GalD subfamily. It depends on Mg(2+) as a cofactor.

It catalyses the reaction D-mannonate = 2-dehydro-3-deoxy-D-gluconate + H2O. Its function is as follows. Has low D-mannonate dehydratase activity (in vitro), suggesting that this is not a physiological substrate and that it has no significant role in D-mannonate degradation in vivo. Has no detectable activity with a panel of 70 other acid sugars (in vitro). The protein is D-galactonate dehydratase family member RspA (rspA) of Cellvibrio japonicus (strain Ueda107) (Pseudomonas fluorescens subsp. cellulosa).